Consider the following 335-residue polypeptide: Phosphate acyltransferase (335 aa).

Belongs to the PlsX family. Homodimer. Probably interacts with PlsY.

The protein resides in the cytoplasm. It catalyses the reaction a fatty acyl-[ACP] + phosphate = an acyl phosphate + holo-[ACP]. The protein operates within lipid metabolism; phospholipid metabolism. In terms of biological role, catalyzes the reversible formation of acyl-phosphate (acyl-PO(4)) from acyl-[acyl-carrier-protein] (acyl-ACP). This enzyme utilizes acyl-ACP as fatty acyl donor, but not acyl-CoA. The sequence is that of Phosphate acyltransferase from Streptococcus pyogenes serotype M28 (strain MGAS6180).